The following is a 713-amino-acid chain: Leucine-rich repeat neuronal protein 2 (713 aa).

The N-terminal stretch at 1-18 is a signal peptide; that stretch reads MRLLVAPLLLAWVAGATA. The Extracellular segment spans residues 19–630; the sequence is AVPVVPWHVP…CHRALGDRPG (612 aa). Positions 20 to 69 constitute an LRRNT domain; that stretch reads VPVVPWHVPCPPQCACQIRPWYTPRSSYREATTVDCNDLFLTAVPPALPA. 12 LRR repeats span residues 70 to 91, 94 to 115, 118 to 139, 142 to 163, 166 to 187, 190 to 211, 214 to 235, 238 to 259, 262 to 283, 286 to 305, 311 to 333, and 336 to 357; these read GTQT…ELGY, NLTE…DFHA, QLLS…SFAG, SLQE…AFSG, NLLR…WFEM, NLEI…NFRP, NLRS…ALEG, SLES…ALEQ, GLKF…DFAN, HLKE…DKFA, ELTK…AFHH, and QMET…TVES. The N-linked (GlcNAc...) asparagine glycan is linked to N94. The LRRCT domain occupies 369-422; it reads NPIRCDCVIRWANATGTRVRFIEPQSTLCAEPPDLQRLPVREVPFREMTDHCLP. An N-linked (GlcNAc...) asparagine glycan is attached at N381. The region spanning 422–511 is the Ig-like C2-type domain; it reads PLISPRSFPP…LVGADTKTVS (90 aa). Cysteines 445 and 497 form a disulfide. N-linked (GlcNAc...) asparagine glycans are attached at residues N555 and N583. The helical transmembrane segment at 631-651 threads the bilayer; that stretch reads LIAILALAVLLLAAGLAAHLG. The Cytoplasmic segment spans residues 652-713; the sequence is TGQPRKGVGG…TLLPPLSQNS (62 aa).

In terms of tissue distribution, overamplified in malignant gliomas.

It localises to the membrane. In Homo sapiens (Human), this protein is Leucine-rich repeat neuronal protein 2 (LRRN2).